Here is a 425-residue protein sequence, read N- to C-terminus: MLDLKFIRKHPEAVRMALEKRGAEFDLDRLLDLDDEWRQKLFTVERLKNRRNAVSEEIARLKKAGEPAEELIAEMRNVSQQIRELDGEIRQVEENLQALLLQVPNIPHPLVPFGRADTDNEEVRRWGEPPAFGFEPRPHWELGEELNILDFARGGKVSGARFSFCRGAGARLERALICFMLDLHVDRHGYTELFPPFLVNAQSMTGTGQLPKFAADMYKVENEDYYLVPTAEVPVTNYLRDEILDGDTLPRKYAAYSACFRAEAGAAGRDTRGLIRQHQFNKVELVKFTRPEDSEDELEKLVRDAEEVLRLLRLPYRVVLLCTGDLGFSSSRTYDLEVWMPGQGVYREISSCSNFTDFQARRANIRYRAHPRAKADFVHTLNGSGLAVGRTLAAVLENFQQADGTVTVPEVLRPYMGGMERITRK.

230-232 provides a ligand contact to L-serine; sequence TAE. Position 261–263 (261–263) interacts with ATP; the sequence is RAE. E284 contributes to the L-serine binding site. 348–351 is a binding site for ATP; the sequence is EISS. S384 contacts L-serine.

The protein belongs to the class-II aminoacyl-tRNA synthetase family. Type-1 seryl-tRNA synthetase subfamily. In terms of assembly, homodimer. The tRNA molecule binds across the dimer.

It localises to the cytoplasm. It carries out the reaction tRNA(Ser) + L-serine + ATP = L-seryl-tRNA(Ser) + AMP + diphosphate + H(+). The catalysed reaction is tRNA(Sec) + L-serine + ATP = L-seryl-tRNA(Sec) + AMP + diphosphate + H(+). It participates in aminoacyl-tRNA biosynthesis; selenocysteinyl-tRNA(Sec) biosynthesis; L-seryl-tRNA(Sec) from L-serine and tRNA(Sec): step 1/1. Its function is as follows. Catalyzes the attachment of serine to tRNA(Ser). Is also able to aminoacylate tRNA(Sec) with serine, to form the misacylated tRNA L-seryl-tRNA(Sec), which will be further converted into selenocysteinyl-tRNA(Sec). This chain is Serine--tRNA ligase, found in Desulforudis audaxviator (strain MP104C).